The primary structure comprises 125 residues: Small ribosomal subunit protein uS12 (125 aa).

The residue at position 89 (Asp-89) is a 3-methylthioaspartic acid.

It belongs to the universal ribosomal protein uS12 family. In terms of assembly, part of the 30S ribosomal subunit. Contacts proteins S8 and S17. May interact with IF1 in the 30S initiation complex.

In terms of biological role, with S4 and S5 plays an important role in translational accuracy. Functionally, interacts with and stabilizes bases of the 16S rRNA that are involved in tRNA selection in the A site and with the mRNA backbone. Located at the interface of the 30S and 50S subunits, it traverses the body of the 30S subunit contacting proteins on the other side and probably holding the rRNA structure together. The combined cluster of proteins S8, S12 and S17 appears to hold together the shoulder and platform of the 30S subunit. In Wigglesworthia glossinidia brevipalpis, this protein is Small ribosomal subunit protein uS12.